Consider the following 249-residue polypeptide: 2,3-bisphosphoglycerate-dependent phosphoglycerate mutase (249 aa).

Substrate is bound by residues 8–15 (RHGESVWN), 21–22 (TG), Arg60, 87–90 (ERHY), Lys98, 114–115 (RR), and 183–184 (GN). Residue His9 is the Tele-phosphohistidine intermediate of the active site. Catalysis depends on Glu87, which acts as the Proton donor/acceptor.

The protein belongs to the phosphoglycerate mutase family. BPG-dependent PGAM subfamily.

The catalysed reaction is (2R)-2-phosphoglycerate = (2R)-3-phosphoglycerate. It functions in the pathway carbohydrate degradation; glycolysis; pyruvate from D-glyceraldehyde 3-phosphate: step 3/5. Its function is as follows. Catalyzes the interconversion of 2-phosphoglycerate and 3-phosphoglycerate. The sequence is that of 2,3-bisphosphoglycerate-dependent phosphoglycerate mutase from Endomicrobium trichonymphae.